The chain runs to 132 residues: Interleukin-13 (132 aa).

The N-terminal stretch at 1 to 18 (MALLLTTVIALTCLGGFA) is a signal peptide. N-linked (GlcNAc...) asparagine glycans are attached at residues Asn38, Asn49, Asn57, and Asn72. 2 disulfide bridges follow: Cys48/Cys76 and Cys64/Cys90.

It belongs to the IL-4/IL-13 family. Interacts with IL13RA2.

It localises to the secreted. Cytokine that plays important roles in allergic inflammation and immune response to parasite infection. Synergizes with IL2 in regulating interferon-gamma synthesis. Stimulates B-cell proliferation, and activation of eosinophils, basophils, and mast cells. Plays an important role in controlling IL33 activity by modulating the production of transmembrane and soluble forms of interleukin-1 receptor-like 1/IL1RL1. Displays the capacity to antagonize Th1-driven proinflammatory immune response and downregulates synthesis of many proinflammatory cytokines including IL1, IL6, IL10, IL12 and TNF-alpha through a mechanism that partially involves suppression of NF-kappa-B. Also functions on nonhematopoietic cells, including endothelial cells where it induces vascular cell adhesion protein 1/VCAM1, which is important in the recruitment of eosinophils. Exerts its biological effects through its receptors which comprises the IL4R chain and the IL13RA1 chain, to activate JAK1 and TYK2, leading to the activation of STAT6. Aside from IL13RA1, another receptor IL13RA2 acts as a high affinity decoy for IL13 and mediates internalization and depletion of extracellular IL13. This Macaca mulatta (Rhesus macaque) protein is Interleukin-13 (IL13).